Reading from the N-terminus, the 373-residue chain is Chaperone protein DnaJ (373 aa).

The J domain maps to 4–68 (DFYEILGVSR…QARANYDRFG (65 aa)). A CR-type zinc finger spans residues 132–214 (GGEKEIRINH…CGGQGHIQVS (83 aa)). Residues Cys-145, Cys-148, Cys-162, Cys-165, Cys-188, Cys-191, Cys-202, and Cys-205 each coordinate Zn(2+). 4 CXXCXGXG motif repeats span residues 145–152 (CKTCQGTG), 162–169 (CSTCGGVG), 188–195 (CPTCGGSG), and 202–209 (CESCGGQG).

It belongs to the DnaJ family. In terms of assembly, homodimer. Zn(2+) serves as cofactor.

The protein resides in the cytoplasm. Functionally, participates actively in the response to hyperosmotic and heat shock by preventing the aggregation of stress-denatured proteins and by disaggregating proteins, also in an autonomous, DnaK-independent fashion. Unfolded proteins bind initially to DnaJ; upon interaction with the DnaJ-bound protein, DnaK hydrolyzes its bound ATP, resulting in the formation of a stable complex. GrpE releases ADP from DnaK; ATP binding to DnaK triggers the release of the substrate protein, thus completing the reaction cycle. Several rounds of ATP-dependent interactions between DnaJ, DnaK and GrpE are required for fully efficient folding. Also involved, together with DnaK and GrpE, in the DNA replication of plasmids through activation of initiation proteins. The polypeptide is Chaperone protein DnaJ (Thermosynechococcus vestitus (strain NIES-2133 / IAM M-273 / BP-1)).